Here is a 284-residue protein sequence, read N- to C-terminus: Shikimate dehydrogenase (NADP(+)) (284 aa).

Shikimate-binding positions include 20–22 (SIS) and serine 67. Lysine 71 acts as the Proton acceptor in catalysis. Position 83 (aspartate 83) interacts with NADP(+). Residues asparagine 92 and aspartate 107 each contribute to the shikimate site. Residues 129–133 (GAGGA) and isoleucine 227 each bind NADP(+). Tyrosine 229 is a shikimate binding site. Position 250 (glycine 250) interacts with NADP(+).

The protein belongs to the shikimate dehydrogenase family. As to quaternary structure, homodimer.

The catalysed reaction is shikimate + NADP(+) = 3-dehydroshikimate + NADPH + H(+). The protein operates within metabolic intermediate biosynthesis; chorismate biosynthesis; chorismate from D-erythrose 4-phosphate and phosphoenolpyruvate: step 4/7. Its function is as follows. Involved in the biosynthesis of the chorismate, which leads to the biosynthesis of aromatic amino acids. Catalyzes the reversible NADPH linked reduction of 3-dehydroshikimate (DHSA) to yield shikimate (SA). In Streptococcus pneumoniae (strain ATCC 700669 / Spain 23F-1), this protein is Shikimate dehydrogenase (NADP(+)).